We begin with the raw amino-acid sequence, 587 residues long: General negative regulator of transcription subunit 4 (587 aa).

The RING-type zinc finger occupies 33 to 78 (CPLCIEPMDITDKNFFPCPCGYQICQFCYNNIRQNPELNGRCPACR). Residues 94-128 (EELKMERAKLARKEKERKHREKERKENEYTNRKHL) are a coiled coil. Residues 137-228 (NLVYVVGINP…YMDGRLIKAA (92 aa)) form the RRM domain. The segment at 229-256 (YGTTKYCSSYLRGLPCPNPNCMFLHEPG) adopts a C3H1-type zinc-finger fold. A Glycyl lysine isopeptide (Lys-Gly) (interchain with G-Cter in ubiquitin) cross-link involves residue K270. Residue T310 is modified to Phosphothreonine. S312 carries the phosphoserine modification. T326 carries the phosphothreonine modification. The residue at position 360 (S360) is a Phosphoserine. The interval 370 to 412 (TLNDSLGHHTTPTTENTITSTTTTTNTNATSHSHGSKKKQSLA) is disordered. Positions 377-402 (HHTTPTTENTITSTTTTTNTNATSHS) are enriched in low complexity.

Forms a NOT protein complex that comprises NOT1, NOT2, NOT3, NOT4 and NOT5. Subunit of the 1.0 MDa CCR4-NOT core complex that contains CCR4, CAF1, NOT1, NOT2, NOT3, NOT4, NOT5, CAF40 and CAF130. In the complex interacts with NOT1. The core complex probably is part of a less characterized 1.9 MDa CCR4-NOT complex.

Its subcellular location is the cytoplasm. It localises to the nucleus. It carries out the reaction S-ubiquitinyl-[E2 ubiquitin-conjugating enzyme]-L-cysteine + [acceptor protein]-L-lysine = [E2 ubiquitin-conjugating enzyme]-L-cysteine + N(6)-ubiquitinyl-[acceptor protein]-L-lysine.. Its pathway is protein modification; protein ubiquitination. Its function is as follows. E3 ubiquitin-protein ligase component of the CCR4-NOT core complex, which in the nucleus seems to be a general transcription factor, and in the cytoplasm the major mRNA deadenylase involved in mRNA turnover. The NOT protein subcomplex negatively regulates the basal and activated transcription of many genes. Preferentially affects TC-type TATA element-dependent transcription. Could directly or indirectly inhibit component(s) of the general transcription machinery. In the cytoplasm, catalyzes monoubiquitination of RPS7/es7 in response to stalled ribosomes, initiating a HEL2-dependent response that activates the No-Go Decay (NGD) pathway. This chain is General negative regulator of transcription subunit 4 (MOT2), found in Saccharomyces cerevisiae (strain ATCC 204508 / S288c) (Baker's yeast).